Consider the following 126-residue polypeptide: Holo-[acyl-carrier-protein] synthase (126 aa).

Residues D8 and E56 each coordinate Mg(2+).

Belongs to the P-Pant transferase superfamily. AcpS family. The cofactor is Mg(2+).

It localises to the cytoplasm. It catalyses the reaction apo-[ACP] + CoA = holo-[ACP] + adenosine 3',5'-bisphosphate + H(+). In terms of biological role, transfers the 4'-phosphopantetheine moiety from coenzyme A to a Ser of acyl-carrier-protein. The polypeptide is Holo-[acyl-carrier-protein] synthase (Clostridium tetani (strain Massachusetts / E88)).